We begin with the raw amino-acid sequence, 1199 residues long: Ecdysone-induced protein 75B, isoforms C/D (1199 aa).

The interval 130-182 (TTDGPTAVLQQQQPQQQMPQHFESLPHHHPQQEHQPQQQQQQHHLQHHPHPHV) is disordered. Composition is skewed to low complexity over residues 139-149 (QQQQPQQQMPQ) and 162-172 (EHQPQQQQQQH). The nuclear receptor DNA-binding region spans 242-318 (TVLCRVCGDK…VGMSRDAVRF (77 aa)). 2 consecutive NR C4-type zinc fingers follow at residues 245 to 265 (CRVC…CEGC) and 282 to 306 (CTKN…LKKC). The NR LBD domain maps to 352-600 (DQPRLLAAVL…QQMWSMEDGN (249 aa)). 6 disordered regions span residues 624–665 (KSPL…SALA), 771–808 (LDSP…SVDD), 831–851 (VSVS…KRQI), 895–961 (AEAD…SSHS), 991–1104 (ENST…SNSA), and 1155–1188 (VTVT…NPGL). 5 stretches are compositionally biased toward low complexity: residues 641-653 (GSPS…GVSL), 792-804 (SSGG…SPRS), 831-845 (VSVS…STSS), 897-942 (ADAS…AQSQ), and 950-961 (SSPKASMASSHS). Polar residues-rich tracts occupy residues 993-1006 (STAA…VGNR) and 1018-1040 (AVQN…QRQQ). Low complexity-rich tracts occupy residues 1041–1077 (SVSP…SASS), 1086–1104 (STSN…SNSA), and 1159–1187 (ASNG…PNPG).

It belongs to the nuclear hormone receptor family. NR1 subfamily.

It is found in the nucleus. Functionally, implicated in the regulation of ecdysone-triggered gene hierarchies. Probably plays a key role in mediating the regulation of the larval molt by 20-OH-ecdysone. The chain is Ecdysone-induced protein 75B, isoforms C/D (Eip75B) from Drosophila melanogaster (Fruit fly).